Here is a 67-residue protein sequence, read N- to C-terminus: (2R)-sulfolactate sulfo-lyase subunit alpha (67 aa).

As to quaternary structure, (2R)-sulfolactate sulfo-lyase is composed of a SuyA and a SuyB subunit.

It localises to the cytoplasm. It carries out the reaction (2R)-3-sulfolactate = sulfite + pyruvate + H(+). Functionally, together with SuyB, desulfonates sulfolactate to pyruvate and sulfite. The sequence is that of (2R)-sulfolactate sulfo-lyase subunit alpha (suyA) from Paracoccus pantotrophus (Thiosphaera pantotropha).